The chain runs to 230 residues: tRNA pseudouridine synthase B (230 aa).

Aspartate 45 (nucleophile) is an active-site residue.

Belongs to the pseudouridine synthase TruB family. Type 1 subfamily.

The enzyme catalyses uridine(55) in tRNA = pseudouridine(55) in tRNA. In terms of biological role, responsible for synthesis of pseudouridine from uracil-55 in the psi GC loop of transfer RNAs. This Endomicrobium trichonymphae protein is tRNA pseudouridine synthase B.